The following is a 204-amino-acid chain: MAFGYDTITPEPVAKLIDEFNRLPGIGPKSASRLVFYLLRAKREQSERLANAIMAMKDSTIFCNRCFNITVEDPCTICTNANRNERQVCVVEEPLDVVALERTGEFKGLYHVLHGAISPVEGINPEDLRIRELLARLRVEPIEEVILSTNPNLEGDATAAYLAREIIPLGIRVTRLARGLPMGSDLEYADEVTLGRALQGRREM.

Residues 63–78 form a C4-type zinc finger; the sequence is CNRCFNITVEDPCTIC. A Toprim domain is found at 86–181; it reads RQVCVVEEPL…RVTRLARGLP (96 aa).

It belongs to the RecR family.

Functionally, may play a role in DNA repair. It seems to be involved in an RecBC-independent recombinational process of DNA repair. It may act with RecF and RecO. The polypeptide is Recombination protein RecR (Herpetosiphon aurantiacus (strain ATCC 23779 / DSM 785 / 114-95)).